A 253-amino-acid polypeptide reads, in one-letter code: MLLYKEKMKLLIKTSLSQWICLNFAKIPIFKMLGFITALFITACSSISKEPVKTVDIYIKPYYSAENGKAENVFVHKEIDPMLRENTIKGYKSAVKFVEENPARISPMTMFTLAARAYDFGLRDEAVTWFYRGQNRLITALYVLDLPKQTVQDNTGFSHVVGQFVNAYAFCNFDKQSLAAENAMKWTVAHPYEVVFLPALPAKFADRQKALKEAEEKLVQRLQEQARFFANPKNKEKWQKERSENFVNERFCW.

This is an uncharacterized protein from Haemophilus influenzae (strain ATCC 51907 / DSM 11121 / KW20 / Rd).